Here is a 156-residue protein sequence, read N- to C-terminus: ATP synthase subunit b (156 aa).

Residues 7-27 (LFAQMIVFFVLWWVVARFVWP) traverse the membrane as a helical segment.

It belongs to the ATPase B chain family. In terms of assembly, F-type ATPases have 2 components, F(1) - the catalytic core - and F(0) - the membrane proton channel. F(1) has five subunits: alpha(3), beta(3), gamma(1), delta(1), epsilon(1). F(0) has three main subunits: a(1), b(2) and c(10-14). The alpha and beta chains form an alternating ring which encloses part of the gamma chain. F(1) is attached to F(0) by a central stalk formed by the gamma and epsilon chains, while a peripheral stalk is formed by the delta and b chains.

It is found in the cell membrane. Its function is as follows. F(1)F(0) ATP synthase produces ATP from ADP in the presence of a proton or sodium gradient. F-type ATPases consist of two structural domains, F(1) containing the extramembraneous catalytic core and F(0) containing the membrane proton channel, linked together by a central stalk and a peripheral stalk. During catalysis, ATP synthesis in the catalytic domain of F(1) is coupled via a rotary mechanism of the central stalk subunits to proton translocation. Component of the F(0) channel, it forms part of the peripheral stalk, linking F(1) to F(0). The chain is ATP synthase subunit b from Polynucleobacter asymbioticus (strain DSM 18221 / CIP 109841 / QLW-P1DMWA-1) (Polynucleobacter necessarius subsp. asymbioticus).